We begin with the raw amino-acid sequence, 276 residues long: Protein canopy homolog 3 (276 aa).

The first 26 residues, 1–26, serve as a signal peptide directing secretion; sequence MESMSELAPRCLLFPLLLLLPLLLLP. The Saposin B-type domain maps to 47–269; sequence SKCEVCKYVA…EGVQKASPLP (223 aa). Cystine bridges form between cysteine 49-cysteine 206, cysteine 52-cysteine 194, and cysteine 104-cysteine 166. Asparagine 153 is a glycosylation site (N-linked (GlcNAc...) asparagine). Residues 153–179 are a coiled coil; it reads NETSAEVADLKKQCDVLVEEFEEVIED. The segment at 218-276 is disordered; it reads IASLGGKKSKKKRSGVKGSSSGSSKQRKELGGLGEDANAEEEEGVQKASPLPHSPPDEL.

The protein belongs to the canopy family. In terms of assembly, interacts with HSP90B1; this interaction is disrupted in the presence of ATP. Interacts with TLR1, TLR2, TLR4 and TLR9. Strongest interaction with TLR4.

The protein resides in the endoplasmic reticulum. Toll-like receptor (TLR)-specific co-chaperone for HSP90B1. Required for proper TLR folding, except that of TLR3, and hence controls TLR exit from the endoplasmic reticulum. Consequently, required for both innate and adaptive immune responses. The protein is Protein canopy homolog 3 (Cnpy3) of Mus musculus (Mouse).